Reading from the N-terminus, the 216-residue chain is Adenylate kinase (216 aa).

10–15 is a binding site for ATP; that stretch reads GAGKGT. The interval 30 to 59 is NMP; sequence STGDMFRAAMKNETALGLEAKSYIDKGELV. AMP-binding positions include T31, R36, 57–59, 85–88, and Q92; these read ELV and GFPR. Residues 126 to 164 form an LID region; that stretch reads GRFICRTCGATYHKLFNPPKVEGTCDRCGGHEFYQREDD. R127 provides a ligand contact to ATP. 2 residues coordinate Zn(2+): C130 and C133. Residue 136–137 participates in ATP binding; that stretch reads TY. Positions 150 and 153 each coordinate Zn(2+). Residues R161 and R172 each contribute to the AMP site. Residue R200 participates in ATP binding.

It belongs to the adenylate kinase family. In terms of assembly, monomer.

The protein resides in the cytoplasm. It carries out the reaction AMP + ATP = 2 ADP. It participates in purine metabolism; AMP biosynthesis via salvage pathway; AMP from ADP: step 1/1. Catalyzes the reversible transfer of the terminal phosphate group between ATP and AMP. Plays an important role in cellular energy homeostasis and in adenine nucleotide metabolism. The sequence is that of Adenylate kinase from Enterococcus faecalis (strain ATCC 700802 / V583).